We begin with the raw amino-acid sequence, 444 residues long: Tubulin beta-4 chain (444 aa).

Residues Gln-11, Glu-69, Ser-138, Gly-142, Thr-143, Gly-144, Asn-204, and Asn-226 each coordinate GTP. A Mg(2+)-binding site is contributed by Glu-69.

The protein belongs to the tubulin family. Dimer of alpha and beta chains. A typical microtubule is a hollow water-filled tube with an outer diameter of 25 nm and an inner diameter of 15 nM. Alpha-beta heterodimers associate head-to-tail to form protofilaments running lengthwise along the microtubule wall with the beta-tubulin subunit facing the microtubule plus end conferring a structural polarity. Microtubules usually have 13 protofilaments but different protofilament numbers can be found in some organisms and specialized cells. It depends on Mg(2+) as a cofactor.

The protein localises to the cytoplasm. Its subcellular location is the cytoskeleton. Its function is as follows. Tubulin is the major constituent of microtubules, a cylinder consisting of laterally associated linear protofilaments composed of alpha- and beta-tubulin heterodimers. Microtubules grow by the addition of GTP-tubulin dimers to the microtubule end, where a stabilizing cap forms. Below the cap, tubulin dimers are in GDP-bound state, owing to GTPase activity of alpha-tubulin. The polypeptide is Tubulin beta-4 chain (TUBB4) (Arabidopsis thaliana (Mouse-ear cress)).